Consider the following 229-residue polypeptide: Uracil-DNA glycosylase (229 aa).

Catalysis depends on aspartate 65, which acts as the Proton acceptor.

The protein belongs to the uracil-DNA glycosylase (UDG) superfamily. UNG family.

It is found in the cytoplasm. It catalyses the reaction Hydrolyzes single-stranded DNA or mismatched double-stranded DNA and polynucleotides, releasing free uracil.. Its function is as follows. Excises uracil residues from the DNA which can arise as a result of misincorporation of dUMP residues by DNA polymerase or due to deamination of cytosine. The chain is Uracil-DNA glycosylase from Limosilactobacillus fermentum (strain NBRC 3956 / LMG 18251) (Lactobacillus fermentum).